Consider the following 245-residue polypeptide: Sugar fermentation stimulation protein homolog (245 aa).

Belongs to the SfsA family.

This chain is Sugar fermentation stimulation protein homolog, found in Yersinia pestis bv. Antiqua (strain Nepal516).